Here is a 244-residue protein sequence, read N- to C-terminus: MKMVSDINALKYKKVLLKVSGEALMGNKQFGHEYEVIKKIAEDIKEVIDLGLEVAIVVGGGNIYRGINAALVGMDRASADYIGMLATVINALTLQNVMESLGIYTRVLSAIPMMSVCEPYIRRKAKRHMEKKRVVIFAGGTGNPFCTTDSAAVLRAIEMNCDILLKATQVDGVYDSDPKKNPNAKKYFTISYKDVITNHLQVMDTAAIAVARENKLPIRVFSIKEHGNIARVIQNKGKYTTIEE.

ATP is bound at residue 18 to 21 (KVSG). A UMP-binding site is contributed by Gly-60. Residues Gly-61 and Arg-65 each coordinate ATP. UMP-binding positions include Asp-80 and 141 to 148 (TGNPFCTT). ATP-binding residues include Thr-168, Gln-169, Tyr-174, and Asp-177.

Belongs to the UMP kinase family. As to quaternary structure, homohexamer.

It localises to the cytoplasm. The catalysed reaction is UMP + ATP = UDP + ADP. The protein operates within pyrimidine metabolism; CTP biosynthesis via de novo pathway; UDP from UMP (UMPK route): step 1/1. Its activity is regulated as follows. Inhibited by UTP. In terms of biological role, catalyzes the reversible phosphorylation of UMP to UDP. In Rickettsia typhi (strain ATCC VR-144 / Wilmington), this protein is Uridylate kinase.